The chain runs to 116 residues: Large ribosomal subunit protein bL19 (116 aa).

It belongs to the bacterial ribosomal protein bL19 family.

In terms of biological role, this protein is located at the 30S-50S ribosomal subunit interface and may play a role in the structure and function of the aminoacyl-tRNA binding site. The protein is Large ribosomal subunit protein bL19 of Lactobacillus gasseri (strain ATCC 33323 / DSM 20243 / BCRC 14619 / CIP 102991 / JCM 1131 / KCTC 3163 / NCIMB 11718 / NCTC 13722 / AM63).